The sequence spans 399 residues: Pre-mycofactocin synthase (399 aa).

Residues 4–386 form the FMN hydroxy acid dehydrogenase domain; the sequence is ARDIWFETVA…VPEDILVPEG (383 aa). FMN is bound by residues S111 and Q131. Position 133 (Y133) interacts with a 2-oxocarboxylate. T159 lines the FMN pocket. R168 provides a ligand contact to a 2-oxocarboxylate. An FMN-binding site is contributed by K257. H281 functions as the Proton acceptor in the catalytic mechanism. Residues 312-316 and 335-336 each bind FMN; these read DGGIR and GR.

This sequence belongs to the FMN-dependent alpha-hydroxy acid dehydrogenase family. It depends on FMN as a cofactor.

It catalyses the reaction 3-amino-5-[(4-hydroxyphenyl)methyl]-4,4-dimethyl-2-pyrrolidin-2-one + O2 + H2O = pre-mycofactocin + H2O2 + NH4(+). Involved in the biosynthesis of the enzyme cofactor mycofactocin (MFT). Catalyzes the oxidative deamination of AHDP (3-amino-5-[(4-hydroxyphenyl)methyl]-4,4-dimethyl-2-pyrrolidin-2-one), forming an alpha-keto amide moiety on the resulting molecule, which is called pre-mycofactocin (PMFT). This reaction occurs via a 5-[(4-hydroxyphenyl)methyl]-3-imino-4,4-dimethylpyrrolidin-2-one intermediate, which converts to PMFT. The alpha-keto amide moiety is the redox-active center for the redox activity of mycofactocin. Is required for the in vivo ethanol assimilation in M.smegmatis. The protein is Pre-mycofactocin synthase of Mycolicibacterium smegmatis (strain ATCC 700084 / mc(2)155) (Mycobacterium smegmatis).